Consider the following 317-residue polypeptide: Ribosomal protein L11 methyltransferase (317 aa).

The S-adenosyl-L-methionine site is built by Thr169, Gly190, Asp211, and Asn256.

This sequence belongs to the methyltransferase superfamily. PrmA family.

The protein resides in the cytoplasm. It carries out the reaction L-lysyl-[protein] + 3 S-adenosyl-L-methionine = N(6),N(6),N(6)-trimethyl-L-lysyl-[protein] + 3 S-adenosyl-L-homocysteine + 3 H(+). In terms of biological role, methylates ribosomal protein L11. The chain is Ribosomal protein L11 methyltransferase from Helicobacter hepaticus (strain ATCC 51449 / 3B1).